A 289-amino-acid chain; its full sequence is UPF0173 metal-dependent hydrolase H16_A2129 (289 aa).

This sequence belongs to the UPF0173 family.

This chain is UPF0173 metal-dependent hydrolase H16_A2129, found in Cupriavidus necator (strain ATCC 17699 / DSM 428 / KCTC 22496 / NCIMB 10442 / H16 / Stanier 337) (Ralstonia eutropha).